A 256-amino-acid chain; its full sequence is tRNA pseudouridine synthase A (256 aa).

The active-site Nucleophile is the D49. Y104 is a binding site for substrate.

Belongs to the tRNA pseudouridine synthase TruA family.

The enzyme catalyses uridine(38/39/40) in tRNA = pseudouridine(38/39/40) in tRNA. In terms of biological role, formation of pseudouridine at positions 38, 39 and 40 in the anticodon stem and loop of transfer RNAs. The polypeptide is tRNA pseudouridine synthase A (Methanopyrus kandleri (strain AV19 / DSM 6324 / JCM 9639 / NBRC 100938)).